The following is a 147-amino-acid chain: Large ribosomal subunit protein uL13 (147 aa).

It belongs to the universal ribosomal protein uL13 family. As to quaternary structure, part of the 50S ribosomal subunit.

This protein is one of the early assembly proteins of the 50S ribosomal subunit, although it is not seen to bind rRNA by itself. It is important during the early stages of 50S assembly. In Streptomyces avermitilis (strain ATCC 31267 / DSM 46492 / JCM 5070 / NBRC 14893 / NCIMB 12804 / NRRL 8165 / MA-4680), this protein is Large ribosomal subunit protein uL13.